The following is a 77-amino-acid chain: Translation initiation factor IF-1, chloroplastic (77 aa).

The S1-like domain maps to 1-71; the sequence is MKEQKLIHEG…TKGRIIYRLR (71 aa).

Belongs to the IF-1 family. As to quaternary structure, component of the 30S ribosomal translation pre-initiation complex which assembles on the 30S ribosome in the order IF-2 and IF-3, IF-1 and N-formylmethionyl-tRNA(fMet); mRNA recruitment can occur at any time during PIC assembly.

It is found in the plastid. The protein localises to the chloroplast. Functionally, one of the essential components for the initiation of protein synthesis. Stabilizes the binding of IF-2 and IF-3 on the 30S subunit to which N-formylmethionyl-tRNA(fMet) subsequently binds. Helps modulate mRNA selection, yielding the 30S pre-initiation complex (PIC). Upon addition of the 50S ribosomal subunit IF-1, IF-2 and IF-3 are released leaving the mature 70S translation initiation complex. This Dioscorea elephantipes (Elephant's foot yam) protein is Translation initiation factor IF-1, chloroplastic.